Reading from the N-terminus, the 367-residue chain is Glutamate 5-kinase (367 aa).

Lys-17 contacts ATP. Positions 57, 144, and 156 each coordinate substrate. ATP is bound by residues 176 to 177 (SD) and 217 to 223 (TGGMTSK). Positions 279 to 357 (AGALTLDEGA…SELPGELRRP (79 aa)) constitute a PUA domain.

Belongs to the glutamate 5-kinase family.

The protein resides in the cytoplasm. The catalysed reaction is L-glutamate + ATP = L-glutamyl 5-phosphate + ADP. The protein operates within amino-acid biosynthesis; L-proline biosynthesis; L-glutamate 5-semialdehyde from L-glutamate: step 1/2. Catalyzes the transfer of a phosphate group to glutamate to form L-glutamate 5-phosphate. This chain is Glutamate 5-kinase, found in Mycobacterium avium (strain 104).